The sequence spans 101 residues: Protein Tat (101 aa).

Residues 1 to 24 (MDPVDPKLEPWNHPGSQPTTPCNK) form an interaction with human CREBBP region. The interval 1–48 (MDPVDPKLEPWNHPGSQPTTPCNKCYCKVCCWHCQVCFLNKGLGISYG) is transactivation. Zn(2+) is bound by residues C22, C25, and C27. Residues 22–37 (CNKCYCKVCCWHCQVC) form a cysteine-rich region. K28 carries the N6-acetyllysine; by host PCAF modification. Positions 30, 33, 34, and 37 each coordinate Zn(2+). Residues 38–48 (FLNKGLGISYG) are core. The disordered stretch occupies residues 48–101 (GRKKRRPRRGTPQGSKDHQNPVPKQPLPITSGNPTGSEKPKKEVASKTETDPLD). The short motif at 49–57 (RKKRRPRRG) is the Nuclear localization signal, RNA-binding (TAR), and protein transduction element. Residues 49 to 86 (RKKRRPRRGTPQGSKDHQNPVPKQPLPITSGNPTGSEK) are interaction with the host capping enzyme RNGTT. N6-acetyllysine; by host EP300 and GCN5L2 occurs at positions 50 and 51. Asymmetric dimethylarginine; by host PRMT6 occurs at positions 52 and 53. Residue K71 forms a Glycyl lysine isopeptide (Lys-Gly) (interchain with G-Cter in ubiquitin) linkage. The span at 85 to 101 (EKPKKEVASKTETDPLD) shows a compositional bias: basic and acidic residues.

Belongs to the lentiviruses Tat family. In terms of assembly, interacts with host CCNT1. Associates with the P-TEFb complex composed at least of Tat, P-TEFb (CDK9 and CCNT1), TAR RNA, RNA Pol II. Recruits the HATs CREBBP, TAF1/TFIID, EP300, PCAF and GCN5L2. Interacts with host KAT5/Tip60; this interaction targets the latter to degradation. Interacts with the host deacetylase SIRT1. Interacts with host capping enzyme RNGTT; this interaction stimulates RNGTT. Binds to host KDR, and to the host integrins ITGAV/ITGB3 and ITGA5/ITGB1. Interacts with host KPNB1/importin beta-1 without previous binding to KPNA1/importin alpha-1. Interacts with EIF2AK2. Interacts with host nucleosome assembly protein NAP1L1; this interaction may be required for the transport of Tat within the nucleus, since the two proteins interact at the nuclear rim. Interacts with host C1QBP/SF2P32; this interaction involves lysine-acetylated Tat. Interacts with the host chemokine receptors CCR2, CCR3 and CXCR4. Interacts with host DPP4/CD26; this interaction may trigger an anti-proliferative effect. Interacts with host LDLR. Interacts with the host extracellular matrix metalloproteinase MMP1. Interacts with host PRMT6; this interaction mediates Tat's methylation. Interacts with, and is ubiquitinated by MDM2/Hdm2. Interacts with host PSMC3 and HTATIP2. Interacts with STAB1; this interaction may overcome SATB1-mediated repression of IL2 and IL2RA (interleukin) in T cells by binding to the same domain than HDAC1. Interacts (when acetylated) with human CDK13, thereby increasing HIV-1 mRNA splicing and promoting the production of the doubly spliced HIV-1 protein Nef. Interacts with host TBP; this interaction modulates the activity of transcriptional pre-initiation complex. Interacts with host RELA. Interacts with host PLSCR1; this interaction negatively regulates Tat transactivation activity by altering its subcellular distribution. Post-translationally, asymmetrical arginine methylation by host PRMT6 seems to diminish the transactivation capacity of Tat and affects the interaction with host CCNT1. In terms of processing, acetylation by EP300, CREBBP, GCN5L2/GCN5 and PCAF regulates the transactivation activity of Tat. EP300-mediated acetylation of Lys-50 promotes dissociation of Tat from the TAR RNA through the competitive binding to PCAF's bromodomain. In addition, the non-acetylated Tat's N-terminus can also interact with PCAF. PCAF-mediated acetylation of Lys-28 enhances Tat's binding to CCNT1. Lys-50 is deacetylated by SIRT1. Polyubiquitination by host MDM2 does not target Tat to degradation, but activates its transactivation function and fosters interaction with CCNT1 and TAR RNA. Post-translationally, phosphorylated by EIF2AK2 on serine and threonine residues adjacent to the basic region important for TAR RNA binding and function. Phosphorylation of Tat by EIF2AK2 is dependent on the prior activation of EIF2AK2 by dsRNA.

It is found in the host nucleus. The protein localises to the host nucleolus. It localises to the host cytoplasm. Its subcellular location is the secreted. In terms of biological role, transcriptional activator that increases RNA Pol II processivity, thereby increasing the level of full-length viral transcripts. Recognizes a hairpin structure at the 5'-LTR of the nascent viral mRNAs referred to as the transactivation responsive RNA element (TAR) and recruits the cyclin T1-CDK9 complex (P-TEFb complex) that will in turn hyperphosphorylate the RNA polymerase II to allow efficient elongation. The CDK9 component of P-TEFb and other Tat-activated kinases hyperphosphorylate the C-terminus of RNA Pol II that becomes stabilized and much more processive. Other factors such as HTATSF1/Tat-SF1, SUPT5H/SPT5, and HTATIP2 are also important for Tat's function. Besides its effect on RNA Pol II processivity, Tat induces chromatin remodeling of proviral genes by recruiting the histone acetyltransferases (HATs) CREBBP, EP300 and PCAF to the chromatin. This also contributes to the increase in proviral transcription rate, especially when the provirus integrates in transcriptionally silent region of the host genome. To ensure maximal activation of the LTR, Tat mediates nuclear translocation of NF-kappa-B by interacting with host RELA. Through its interaction with host TBP, Tat may also modulate transcription initiation. Tat can reactivate a latently infected cell by penetrating in it and transactivating its LTR promoter. In the cytoplasm, Tat is thought to act as a translational activator of HIV-1 mRNAs. Its function is as follows. Extracellular circulating Tat can be endocytosed by surrounding uninfected cells via the binding to several surface receptors such as CD26, CXCR4, heparan sulfate proteoglycans (HSPG) or LDLR. Neurons are rarely infected, but they internalize Tat via their LDLR. Through its interaction with nuclear HATs, Tat is potentially able to control the acetylation-dependent cellular gene expression. Modulates the expression of many cellular genes involved in cell survival, proliferation or in coding for cytokines or cytokine receptors. Tat plays a role in T-cell and neurons apoptosis. Tat induced neurotoxicity and apoptosis probably contribute to neuroAIDS. Circulating Tat also acts as a chemokine-like and/or growth factor-like molecule that binds to specific receptors on the surface of the cells, affecting many cellular pathways. In the vascular system, Tat binds to ITGAV/ITGB3 and ITGA5/ITGB1 integrins dimers at the surface of endothelial cells and competes with bFGF for heparin-binding sites, leading to an excess of soluble bFGF. This is Protein Tat from Homo sapiens (Human).